Consider the following 161-residue polypeptide: Nucleotide-binding protein Bphyt_3208 (161 aa).

Belongs to the YajQ family.

Its function is as follows. Nucleotide-binding protein. In Paraburkholderia phytofirmans (strain DSM 17436 / LMG 22146 / PsJN) (Burkholderia phytofirmans), this protein is Nucleotide-binding protein Bphyt_3208.